The sequence spans 807 residues: Glycerol-3-phosphate acyltransferase (807 aa).

Positions 308 to 313 (CHRSHM) match the HXXXXD motif motif.

Belongs to the GPAT/DAPAT family.

Its subcellular location is the cell inner membrane. It catalyses the reaction sn-glycerol 3-phosphate + an acyl-CoA = a 1-acyl-sn-glycero-3-phosphate + CoA. It functions in the pathway phospholipid metabolism; CDP-diacylglycerol biosynthesis; CDP-diacylglycerol from sn-glycerol 3-phosphate: step 1/3. This Shewanella sp. (strain MR-4) protein is Glycerol-3-phosphate acyltransferase.